A 159-amino-acid polypeptide reads, in one-letter code: SsrA-binding protein (159 aa).

The interval 131–159 is disordered; it reads KGKKLHDKRESEKERDWNRQKSRLLKDNG. Residues 137 to 159 show a composition bias toward basic and acidic residues; that stretch reads DKRESEKERDWNRQKSRLLKDNG.

The protein belongs to the SmpB family.

The protein resides in the cytoplasm. Functionally, required for rescue of stalled ribosomes mediated by trans-translation. Binds to transfer-messenger RNA (tmRNA), required for stable association of tmRNA with ribosomes. tmRNA and SmpB together mimic tRNA shape, replacing the anticodon stem-loop with SmpB. tmRNA is encoded by the ssrA gene; the 2 termini fold to resemble tRNA(Ala) and it encodes a 'tag peptide', a short internal open reading frame. During trans-translation Ala-aminoacylated tmRNA acts like a tRNA, entering the A-site of stalled ribosomes, displacing the stalled mRNA. The ribosome then switches to translate the ORF on the tmRNA; the nascent peptide is terminated with the 'tag peptide' encoded by the tmRNA and targeted for degradation. The ribosome is freed to recommence translation, which seems to be the essential function of trans-translation. This chain is SsrA-binding protein, found in Rhizobium leguminosarum bv. trifolii (strain WSM2304).